A 220-amino-acid chain; its full sequence is CASP-like protein 4B1 (220 aa).

The Cytoplasmic segment spans residues 1-74; it reads MAMVTTEAAA…RWRREDMLDK (74 aa). The tract at residues 13–56 is disordered; that stretch reads TTAATAAAEKPQDVEKPDYAPYNGASTTADGGTGARARRGDGGG. Residues 75–95 traverse the membrane as a helical segment; it reads SPLALHAAAAIFAFVALVLVA. Residues 96-109 are Extracellular-facing; that stretch reads SNQHGDWMQFDRYQ. Residues 110 to 127 form a helical membrane-spanning segment; it reads EYRYLLAIASLALLYSLA. The Cytoplasmic portion of the chain corresponds to 128–152; that stretch reads QAARHAHRMRGGVDPVSSASARLLD. A helical membrane pass occupies residues 153-173; it reads FVGDQVVAYLLMSALSAAVPI. The Extracellular segment spans residues 174 to 188; that stretch reads TNRMRSAVVNNFTDA. Residue N184 is glycosylated (N-linked (GlcNAc...) asparagine). The helical transmembrane segment at 189-209 threads the bilayer; sequence TAAAISMAFFSFVALALSAVV. At 210–220 the chain is on the cytoplasmic side; that stretch reads SGYKLSKQTYM.

Belongs to the Casparian strip membrane proteins (CASP) family. Homodimer and heterodimers.

The protein localises to the cell membrane. This Sorghum bicolor (Sorghum) protein is CASP-like protein 4B1.